The primary structure comprises 757 residues: Probable ubiquitin carboxyl-terminal hydrolase MINDY-4 (757 aa).

Disordered stretches follow at residues 152–173 and 190–334; these read FVSSKRPPHKSKPMQTVPGETP and SLDV…LPGG. Residues 190–201 are compositionally biased toward basic and acidic residues; that stretch reads SLDVKRMGENSR. 2 positions are modified to phosphoserine: Ser219 and Ser223. Over residues 232-242 the composition is skewed to low complexity; it reads SSPSSSSTQPQ. Over residues 254-277 the composition is skewed to polar residues; that stretch reads CTQQDILASSNSSPSRTSLGQLSE. Position 289 is a phosphoserine (Ser289). The span at 299-310 shows a compositional bias: basic and acidic residues; it reads PPWDRARPRDPS. The Nucleophile role is filled by Cys456. The Proton acceptor role is filled by His677.

The protein belongs to the MINDY deubiquitinase family. FAM188 subfamily.

It carries out the reaction Thiol-dependent hydrolysis of ester, thioester, amide, peptide and isopeptide bonds formed by the C-terminal Gly of ubiquitin (a 76-residue protein attached to proteins as an intracellular targeting signal).. Its function is as follows. Probable hydrolase that can remove 'Lys-48'-linked conjugated ubiquitin from proteins. This chain is Probable ubiquitin carboxyl-terminal hydrolase MINDY-4, found in Homo sapiens (Human).